The chain runs to 142 residues: Large ribosomal subunit protein uL13 (142 aa).

The protein belongs to the universal ribosomal protein uL13 family. As to quaternary structure, part of the 50S ribosomal subunit.

Its function is as follows. This protein is one of the early assembly proteins of the 50S ribosomal subunit, although it is not seen to bind rRNA by itself. It is important during the early stages of 50S assembly. The polypeptide is Large ribosomal subunit protein uL13 (Acidithiobacillus ferrooxidans (strain ATCC 23270 / DSM 14882 / CIP 104768 / NCIMB 8455) (Ferrobacillus ferrooxidans (strain ATCC 23270))).